The primary structure comprises 245 residues: MKVLDLRELNAMDKSQQTEAMTTVNLQLENMTAEHRVSWALEHLPQPAVLSSSFGIQAAVSLHLVTSQQPNIPVILTDTGYLFPETYQFIDQLTEQLKLNLKVFRAYISPAWQEARYGKLWEQGIKGIQLYNKINKVEPMNRALIQLGSLTWFAGLRRTQSSSRSKLPVLAVQQCLFKLLPIIDWDNRQVHSYLKKHGLNYHPLWEQGYLSVGDTHTTCKWTPGMNEEDTRFFGLKRECGIHEEK.

Cysteine 239 functions as the Nucleophile; cysteine thiosulfonate intermediate in the catalytic mechanism.

Belongs to the PAPS reductase family. CysH subfamily.

It localises to the cytoplasm. It catalyses the reaction [thioredoxin]-disulfide + sulfite + adenosine 3',5'-bisphosphate + 2 H(+) = [thioredoxin]-dithiol + 3'-phosphoadenylyl sulfate. The protein operates within sulfur metabolism; hydrogen sulfide biosynthesis; sulfite from sulfate: step 3/3. In terms of biological role, catalyzes the formation of sulfite from phosphoadenosine 5'-phosphosulfate (PAPS) using thioredoxin as an electron donor. This chain is Phosphoadenosine 5'-phosphosulfate reductase, found in Baumannia cicadellinicola subsp. Homalodisca coagulata.